The sequence spans 409 residues: Peptidase T (409 aa).

Position 78 (His78) interacts with Zn(2+). Asp80 is an active-site residue. Zn(2+) is bound at residue Asp140. The active-site Proton acceptor is Glu173. Zn(2+) is bound by residues Glu174, Asp196, and His379.

It belongs to the peptidase M20B family. Zn(2+) serves as cofactor.

Its subcellular location is the cytoplasm. It catalyses the reaction Release of the N-terminal residue from a tripeptide.. Cleaves the N-terminal amino acid of tripeptides. This Salmonella heidelberg (strain SL476) protein is Peptidase T.